The primary structure comprises 474 residues: Protein nucleotidyltransferase YdiU (474 aa).

Residues Gly89, Gly91, Arg92, Lys112, Asp124, Gly125, Arg175, and Arg182 each coordinate ATP. Residue Asp256 is the Proton acceptor of the active site. Residues Asn257 and Asp266 each contribute to the Mg(2+) site. Asp266 provides a ligand contact to ATP.

This sequence belongs to the SELO family. The cofactor is Mg(2+). Requires Mn(2+) as cofactor.

It catalyses the reaction L-seryl-[protein] + ATP = 3-O-(5'-adenylyl)-L-seryl-[protein] + diphosphate. It carries out the reaction L-threonyl-[protein] + ATP = 3-O-(5'-adenylyl)-L-threonyl-[protein] + diphosphate. The enzyme catalyses L-tyrosyl-[protein] + ATP = O-(5'-adenylyl)-L-tyrosyl-[protein] + diphosphate. The catalysed reaction is L-histidyl-[protein] + UTP = N(tele)-(5'-uridylyl)-L-histidyl-[protein] + diphosphate. It catalyses the reaction L-seryl-[protein] + UTP = O-(5'-uridylyl)-L-seryl-[protein] + diphosphate. It carries out the reaction L-tyrosyl-[protein] + UTP = O-(5'-uridylyl)-L-tyrosyl-[protein] + diphosphate. Its function is as follows. Nucleotidyltransferase involved in the post-translational modification of proteins. It can catalyze the addition of adenosine monophosphate (AMP) or uridine monophosphate (UMP) to a protein, resulting in modifications known as AMPylation and UMPylation. This Corynebacterium glutamicum (strain R) protein is Protein nucleotidyltransferase YdiU.